The sequence spans 85 residues: V-type proton ATPase subunit f (85 aa).

Residues 1-10 (MRPVVSTGKA) are Lumenal-facing. Residues 11-31 (WCCTVLSAFGVVILSVIAHLF) form a helical membrane-spanning segment. Topologically, residues 32 to 54 (NTNHESFVGSINDPEDGPAVAHT) are cytoplasmic. A helical membrane pass occupies residues 55 to 75 (VYLAALVYLVFFVFCGFQVYL). Residues 76 to 85 (ARRKPSIELR) lie on the Lumenal side of the membrane.

As to quaternary structure, V-ATPase is a heteromultimeric enzyme composed of a peripheral catalytic V1 complex (components A to H) attached to an integral membrane V0 proton pore complex (components: a, c, c', c'', d, e, f and VOA1).

It localises to the endoplasmic reticulum membrane. The protein localises to the vacuole membrane. Accessory component of the V0 complex of vacuolar(H+)-ATPase (V-ATPase), a multisubunit enzyme composed of a peripheral complex (V1) that hydrolyzes ATP and a membrane integral complex (V0) that translocates protons. V-ATPase is responsible for acidifying and maintaining the pH of intracellular compartments. The chain is V-type proton ATPase subunit f from Saccharomyces cerevisiae (strain ATCC 204508 / S288c) (Baker's yeast).